The primary structure comprises 364 residues: DNA polymerase IV (364 aa).

Residues 14-198 form the UmuC domain; the sequence is IIHIDMDAFF…LPVEKFHGVG (185 aa). 2 residues coordinate Mg(2+): aspartate 18 and aspartate 116. Residue glutamate 117 is part of the active site.

It belongs to the DNA polymerase type-Y family. As to quaternary structure, monomer. The cofactor is Mg(2+).

The protein resides in the cytoplasm. It carries out the reaction DNA(n) + a 2'-deoxyribonucleoside 5'-triphosphate = DNA(n+1) + diphosphate. In terms of biological role, poorly processive, error-prone DNA polymerase involved in untargeted mutagenesis. Copies undamaged DNA at stalled replication forks, which arise in vivo from mismatched or misaligned primer ends. These misaligned primers can be extended by PolIV. Exhibits no 3'-5' exonuclease (proofreading) activity. May be involved in translesional synthesis, in conjunction with the beta clamp from PolIII. The sequence is that of DNA polymerase IV from Lactococcus lactis subsp. cremoris (strain SK11).